A 183-amino-acid chain; its full sequence is Peptide deformylase (183 aa).

Positions 111 and 154 each coordinate Fe cation. E155 is an active-site residue. H158 contributes to the Fe cation binding site.

The cofactor is Fe(2+).

The catalysed reaction is N-terminal N-formyl-L-methionyl-[peptide] + H2O = N-terminal L-methionyl-[peptide] + formate. Its function is as follows. Removes the formyl group from the N-terminal Met of newly synthesized proteins. Requires at least a dipeptide for an efficient rate of reaction. N-terminal L-methionine is a prerequisite for activity but the enzyme has broad specificity at other positions. The chain is Peptide deformylase from Staphylococcus aureus.